The chain runs to 88 residues: Small ribosomal subunit protein bS20 (88 aa).

A disordered region spans residues 1-27; the sequence is MANSKSAKKRALQSEKRRQHNASRRSM.

This sequence belongs to the bacterial ribosomal protein bS20 family.

Its function is as follows. Binds directly to 16S ribosomal RNA. In Shewanella sediminis (strain HAW-EB3), this protein is Small ribosomal subunit protein bS20.